A 345-amino-acid chain; its full sequence is Gibberellin 2-beta-dioxygenase 2 (345 aa).

The region spanning 170–285 (HSDSLLRINH…RMSMMYFAAP (116 aa)) is the Fe2OG dioxygenase domain. Positions 209, 211, and 266 each coordinate Fe cation. R276 is a catalytic residue.

Belongs to the iron/ascorbate-dependent oxidoreductase family. GA2OX subfamily. Fe cation serves as cofactor. Predominantly expressed in leaves.

It catalyses the reaction gibberellin A1 + 2-oxoglutarate + O2 = gibberellin A8 + succinate + CO2. It participates in plant hormone biosynthesis; gibberellin biosynthesis. Functionally, catalyzes the 2-beta-hydroxylation of several biologically active gibberellins, leading to the homeostatic regulation of their endogenous level. Catabolism of gibberellins (GAs) plays a central role in plant development. Converts GA9/GA20 to GA51/GA29 and GA4/GA1 to GA34/GA8. This is Gibberellin 2-beta-dioxygenase 2 (GA2OX2) from Pisum sativum (Garden pea).